The chain runs to 481 residues: Dual specificity protein kinase CLK4 (481 aa).

Disordered regions lie at residues Met-1–His-46 and Ser-102–Glu-143. A compositionally biased stretch (basic and acidic residues) spans His-8–Arg-24. Basic residues-rich tracts occupy residues Gly-25–His-34 and Val-106–Ser-136. 2 positions are modified to phosphoserine: Ser-136 and Ser-138. Positions Tyr-159–Phe-475 constitute a Protein kinase domain. ATP-binding positions include Leu-165–Val-173 and Lys-189. Asp-286 acts as the Proton acceptor in catalysis.

The protein belongs to the protein kinase superfamily. CMGC Ser/Thr protein kinase family. Lammer subfamily. Interacts with UBL5. Autophosphorylates on all three types of residues. Expressed in liver, kidney, heart, muscle, brain and endothelial cells.

It is found in the nucleus. The catalysed reaction is L-seryl-[protein] + ATP = O-phospho-L-seryl-[protein] + ADP + H(+). The enzyme catalyses L-threonyl-[protein] + ATP = O-phospho-L-threonyl-[protein] + ADP + H(+). It carries out the reaction L-tyrosyl-[protein] + ATP = O-phospho-L-tyrosyl-[protein] + ADP + H(+). With respect to regulation, TG003 inhibits its kinase activity and affects the regulation of alternative splicing mediated by phosphorylation of SR proteins. In terms of biological role, dual specificity kinase acting on both serine/threonine and tyrosine-containing substrates. Phosphorylates serine- and arginine-rich (SR) proteins of the spliceosomal complex and may be a constituent of a network of regulatory mechanisms that enable SR proteins to control RNA splicing. Phosphorylates SRSF1 and SRSF3. Required for the regulation of alternative splicing of MAPT/TAU. Regulates the alternative splicing of tissue factor (F3) pre-mRNA in endothelial cells. In Homo sapiens (Human), this protein is Dual specificity protein kinase CLK4 (CLK4).